The chain runs to 200 residues: Charged multivesicular body protein 6-A (200 aa).

Gly2 carries N-myristoyl glycine lipidation. Positions 9–102 (RRSRVTEQDK…FAQIEMKVIE (94 aa)) form a coiled coil. A disordered region spans residues 166-200 (EDLELPEAPSEPLPDTIPEKQAVKNKPKPQMIAAS). The short motif at 168–179 (LELPEAPSEPLP) is the Type-2 MIT-interacting motif element.

This sequence belongs to the SNF7 family. In terms of assembly, probable core component of the endosomal sorting required for transport complex III (ESCRT-III). ESCRT-III components are thought to multimerize to form a flat lattice on the perimeter membrane of the endosome.

The protein localises to the endomembrane system. Its subcellular location is the late endosome membrane. Probable core component of the endosomal sorting required for transport complex III (ESCRT-III) which is involved in multivesicular bodies (MVBs) formation and sorting of endosomal cargo proteins into MVBs. MVBs contain intraluminal vesicles (ILVs) that are generated by invagination and scission from the limiting membrane of the endosome and mostly are delivered to lysosomes enabling degradation of membrane proteins, such as stimulated growth factor receptors, lysosomal enzymes and lipids. In the ESCRT-III complex, it probably serves as an acceptor for the ESCRT-II complex on endosomal membranes. In Xenopus laevis (African clawed frog), this protein is Charged multivesicular body protein 6-A (chmp6-a).